The chain runs to 231 residues: Cytochrome c oxidase assembly factor 7 (231 aa).

Sel1-like repeat units follow at residues 34–66, 68–104, 108–145, 146–182, and 183–218; these read PDGC…DQNE, SESC…NKGG, IDSC…DGNF, AASC…SLGH, and MWGC…DLHR.

This sequence belongs to the hcp beta-lactamase family.

Its subcellular location is the mitochondrion intermembrane space. Its function is as follows. May be required for assembly of mitochondrial respiratory chain complexes. The protein is Cytochrome c oxidase assembly factor 7 (coa7) of Xenopus tropicalis (Western clawed frog).